The primary structure comprises 221 residues: Pectate lyase C (221 aa).

The signal sequence occupies residues 1–27 (MKKIVSILFMFGLVMGFSQFQPSTVFA).

It belongs to the polysaccharide lyase 3 family. The cofactor is Ca(2+).

Its subcellular location is the secreted. It carries out the reaction Eliminative cleavage of (1-&gt;4)-alpha-D-galacturonan to give oligosaccharides with 4-deoxy-alpha-D-galact-4-enuronosyl groups at their non-reducing ends.. It catalyses the reaction Eliminative cleavage of (1-&gt;4)-alpha-D-galacturonan methyl ester to give oligosaccharides with 4-deoxy-6-O-methyl-alpha-D-galact-4-enuronosyl groups at their non-reducing ends.. Its pathway is glycan metabolism; pectin degradation; 2-dehydro-3-deoxy-D-gluconate from pectin: step 2/5. Catalyzes the depolymerization of both polygalacturonate and pectins of methyl esterification degree from 22 to 89%, with an endo mode of action. In contrast to the majority of pectate lyases, displays high activity on highly methylated pectins. Is also able to cleave trigalacturonate to galacturonic acid and unsaturated digalacturonate. This is Pectate lyase C (pelC) from Bacillus subtilis (strain 168).